Consider the following 231-residue polypeptide: NAD(+) ADP-ribosyltransferase (231 aa).

The catalysed reaction is NAD(+) + (ADP-D-ribosyl)n-acceptor = nicotinamide + (ADP-D-ribosyl)n+1-acceptor + H(+).. Its activity is regulated as follows. Activity increases up to 5-6 times with Mg(2+) at 50 uM or higher ion concentration. 3-aminobenzamide (3-ABA) inhibits the activity by up to half and nicotinamide to a lesser extent. Zn(2+) inhibits the activity to half-maximal rate but at 500 uM concentration of the ion. Functionally, catalyzes auto- and hetero-ADP ribosylation and produces short oligomers by elongating the ADP-ribose chain (up to 6-mer). Binds DNA non-specifically but with high affinity. Forms very stable complexes with circular DNA wherein the circular DNA confers thermostability compared to linear DNA. In Saccharolobus solfataricus (Sulfolobus solfataricus), this protein is NAD(+) ADP-ribosyltransferase.